The following is a 336-amino-acid chain: Delta(1)-pyrroline-2-carboxylate reductase (336 aa).

Residue Ser47 is the Charge relay system of the active site. His48 serves as the catalytic Proton donor. Arg52 contacts substrate. Residue 120-124 (HFSAL) participates in NADP(+) binding. Thr160 serves as a coordination point for substrate. 178 to 180 (DFA) lines the NADP(+) pocket. 186 to 187 (RG) contributes to the substrate binding site. The active-site Charge relay system is the Asp188. NADP(+) contacts are provided by residues 229 to 230 (HK) and 304 to 310 (RLPSQRR).

Belongs to the LDH2/MDH2 oxidoreductase family. As to quaternary structure, homodimer.

The catalysed reaction is L-proline + NAD(+) = 1-pyrroline-2-carboxylate + NADH + H(+). The enzyme catalyses L-proline + NADP(+) = 1-pyrroline-2-carboxylate + NADPH + H(+). Its function is as follows. Catalyzes the reduction of Delta(1)-pyrroline-2-carboxylate (Pyr2C) to L-proline, using NADPH as the electron donor. May be involved in a degradation pathway that converts trans-3-hydroxy-L-proline (t3LHyp) to L-proline. The chain is Delta(1)-pyrroline-2-carboxylate reductase from Pseudomonas fluorescens (strain ATCC BAA-477 / NRRL B-23932 / Pf-5).